Here is a 675-residue protein sequence, read N- to C-terminus: DNA ligase (675 aa).

NAD(+) is bound by residues 32–36 (DAEYD), 81–82 (SL), and glutamate 113. The N6-AMP-lysine intermediate role is filled by lysine 115. Residues arginine 136, glutamate 173, lysine 291, and lysine 315 each coordinate NAD(+). Zn(2+) contacts are provided by cysteine 409, cysteine 412, cysteine 427, and cysteine 433. Residues 595–675 (SEKTYFFNKK…ELNSLIRIKE (81 aa)) form the BRCT domain.

The protein belongs to the NAD-dependent DNA ligase family. LigA subfamily. Mg(2+) serves as cofactor. Requires Mn(2+) as cofactor.

It catalyses the reaction NAD(+) + (deoxyribonucleotide)n-3'-hydroxyl + 5'-phospho-(deoxyribonucleotide)m = (deoxyribonucleotide)n+m + AMP + beta-nicotinamide D-nucleotide.. DNA ligase that catalyzes the formation of phosphodiester linkages between 5'-phosphoryl and 3'-hydroxyl groups in double-stranded DNA using NAD as a coenzyme and as the energy source for the reaction. It is essential for DNA replication and repair of damaged DNA. The polypeptide is DNA ligase (Buchnera aphidicola subsp. Acyrthosiphon pisum (strain 5A)).